Consider the following 433-residue polypeptide: Homoserine dehydrogenase (433 aa).

Positions 13 and 14 each coordinate NADPH. Residues valine 14 and valine 33 each coordinate NAD(+). Valine 14 serves as a coordination point for NADP(+). The NADPH site is built by lysine 45 and lysine 105. Positions 45 and 105 each coordinate NADP(+). Na(+) contacts are provided by glutamate 129, valine 132, glycine 134, and isoleucine 136. Residues glycine 187 and glutamate 190 each coordinate NADP(+). Residues glutamate 190 and aspartate 201 each coordinate L-homoserine. The Proton donor role is filled by lysine 205. Residue glycine 302 participates in NADPH binding. Glycine 302 is an NAD(+) binding site. NADP(+) is bound at residue glycine 302. Residues 350-426 (FLRIHVKDEV…VVQEVKSTYR (77 aa)) enclose the ACT domain.

The protein belongs to the homoserine dehydrogenase family. In terms of assembly, homotetramer. Requires a metal cation as cofactor.

It localises to the cytoplasm. The protein resides in the secreted. The enzyme catalyses L-homoserine + NADP(+) = L-aspartate 4-semialdehyde + NADPH + H(+). It participates in amino-acid biosynthesis; L-methionine biosynthesis via de novo pathway; L-homoserine from L-aspartate: step 3/3. Its pathway is amino-acid biosynthesis; L-threonine biosynthesis; L-threonine from L-aspartate: step 3/5. With respect to regulation, feedback inhibition by threonine. Activated by sodium ions. Functionally, catalyzes the conversion of L-aspartate-beta-semialdehyde (L-Asa) to L-homoserine (L-Hse), the third step in the biosynthesis of threonine and methionine from aspartate. Utilizes NADPH but not NADH as coenzyme. In Bacillus subtilis (strain 168), this protein is Homoserine dehydrogenase (hom).